The chain runs to 135 residues: CDGSH iron-sulfur domain-containing protein 2A (135 aa).

Over 1 to 37 the chain is Lumenal; sequence MVLESIARVIKVQLPAYLKRLPIPDSIAGFIRLTVSE. A helical membrane pass occupies residues 38 to 60; the sequence is WLRLLPFLGVLALLGYLAIRPFL. Residues 61–135 lie on the Cytoplasmic side of the membrane; that stretch reads LKKKQQKDSL…GPLILKKKEV (75 aa). [2Fe-2S] cluster contacts are provided by Cys99, Cys101, Cys110, and His114.

The protein belongs to the CISD protein family. CISD2 subfamily. In terms of assembly, homodimer. It depends on [2Fe-2S] cluster as a cofactor.

It localises to the endoplasmic reticulum membrane. The protein resides in the mitochondrion outer membrane. Its function is as follows. Regulator of autophagy that contributes to antagonize becn1-mediated cellular autophagy at the endoplasmic reticulum. Participates in the interaction of bcl2 with becn1 and is required for bcl2-mediated depression of endoplasmic reticulum Ca(2+) stores during autophagy. This Xenopus laevis (African clawed frog) protein is CDGSH iron-sulfur domain-containing protein 2A (cisd2-a).